A 464-amino-acid chain; its full sequence is ATP synthase subunit beta (464 aa).

154 to 161 contacts ATP; the sequence is GGAGVGKT.

The protein belongs to the ATPase alpha/beta chains family. In terms of assembly, F-type ATPases have 2 components, CF(1) - the catalytic core - and CF(0) - the membrane proton channel. CF(1) has five subunits: alpha(3), beta(3), gamma(1), delta(1), epsilon(1). CF(0) has three main subunits: a(1), b(2) and c(9-12). The alpha and beta chains form an alternating ring which encloses part of the gamma chain. CF(1) is attached to CF(0) by a central stalk formed by the gamma and epsilon chains, while a peripheral stalk is formed by the delta and b chains.

It localises to the cell inner membrane. The enzyme catalyses ATP + H2O + 4 H(+)(in) = ADP + phosphate + 5 H(+)(out). In terms of biological role, produces ATP from ADP in the presence of a proton gradient across the membrane. The catalytic sites are hosted primarily by the beta subunits. In Blochmanniella floridana, this protein is ATP synthase subunit beta.